A 196-amino-acid chain; its full sequence is tRNA(Phe) 7-((3-amino-3-carboxypropyl)-4-demethylwyosine(37)-N(4))-methyltransferase (196 aa).

Belongs to the TYW3 family.

The enzyme catalyses 4-demethyl-7-[(3S)-3-amino-3-carboxypropyl]wyosine(37) in tRNA(Phe) + S-adenosyl-L-methionine = 7-[(3S)-3-amino-3-carboxypropyl]wyosine(37) in tRNA(Phe) + S-adenosyl-L-homocysteine + H(+). Functionally, S-adenosyl-L-methionine-dependent methyltransferase that acts as a component of the wyosine derivatives biosynthesis pathway. Probably methylates N-4 position of wybutosine-86 to produce wybutosine-72. In Archaeoglobus fulgidus (strain ATCC 49558 / DSM 4304 / JCM 9628 / NBRC 100126 / VC-16), this protein is tRNA(Phe) 7-((3-amino-3-carboxypropyl)-4-demethylwyosine(37)-N(4))-methyltransferase.